Here is a 181-residue protein sequence, read N- to C-terminus: U1 small nuclear ribonucleoprotein C (181 aa).

The Matrin-type zinc-finger motif lies at 2 to 34 (PKCDYCDVYLTHDSMSVRKAHNSGRNHLRNVVD). Composition is skewed to pro residues over residues 129 to 143 (PGMP…PGGL) and 150 to 174 (PIPP…PPPG). A disordered region spans residues 129–181 (PGMPAGMPFPPPGGLPPNFQFPIPPPGGFPGMPPPGQGFPGMPPPGGNHDERR).

Belongs to the U1 small nuclear ribonucleoprotein C family. U1 snRNP is composed of the 7 core Sm proteins B/B', D1, D2, D3, E, F and G that assemble in a heptameric protein ring on the Sm site of the small nuclear RNA to form the core snRNP, and at least 3 U1 snRNP-specific proteins U1-70K, U1-A and U1-C. U1-C interacts with U1 snRNA and the 5' splice-site region of the pre-mRNA.

It localises to the nucleus. Component of the spliceosomal U1 snRNP, which is essential for recognition of the pre-mRNA 5' splice-site and the subsequent assembly of the spliceosome. U1-C is directly involved in initial 5' splice-site recognition for both constitutive and regulated alternative splicing. The interaction with the 5' splice-site seems to precede base-pairing between the pre-mRNA and the U1 snRNA. Stimulates commitment or early (E) complex formation by stabilizing the base pairing of the 5' end of the U1 snRNA and the 5' splice-site region. In Sclerotinia sclerotiorum (strain ATCC 18683 / 1980 / Ss-1) (White mold), this protein is U1 small nuclear ribonucleoprotein C.